The primary structure comprises 263 residues: Glycerol uptake facilitator protein (263 aa).

Residues 1 to 7 (MNIYRKK) are Cytoplasmic-facing. Residues 8–36 (NIIKKCFMEFFGTGLVMFFGIGCLAASKL) form a helical membrane-spanning segment. The Extracellular portion of the chain corresponds to 37–41 (TNANF). The helical transmembrane segment at 42–62 (TQFEISCIWGFGVSIAIYFSS) threads the bilayer. Residues 63–65 (SIS) are Cytoplasmic-facing. The stretch at 66-69 (GAHL) is an intramembrane region. The NPA 1 signature appears at 70–72 (NPA). An intramembrane region (helical) is located at residues 70–80 (NPAVTIFFWLS). Topologically, residues 81-86 (SKLNKR) are cytoplasmic. The helical transmembrane segment at 87-110 (KVLPYIISQTLGSFFFTMLTYYLY) threads the bilayer. Residues 111-145 (NNLLISFERNNNVVRGTQESLNLASIFCVYPNYNN) lie on the Extracellular side of the membrane. Residues 146–171 (SFIYDFIIEIFSTALFILIVLEFNNR) form a helical membrane-spanning segment. Topologically, residues 172-181 (NSNYFLYNRS) are cytoplasmic. The chain crosses the membrane as a helical span at residues 182-198 (VAPILTGFLVCMINLVI). Residues 199–202 (NPLN) lie on the Extracellular side of the membrane. An intramembrane segment occupies 203 to 206 (NISL). An NPA 2 motif is present at residues 207-209 (NPA). Positions 207–220 (NPARDLGPKILLSL) form an intramembrane region, helical. Over 221–236 (TGWGLFSFTGGNDNIL) the chain is Extracellular. The helical transmembrane segment at 237–259 (YCFIPIMGPILGANLGGWIHKTL) threads the bilayer. Residues 260-263 (INNS) are Cytoplasmic-facing.

Belongs to the MIP/aquaporin (TC 1.A.8) family.

The protein localises to the cell membrane. The catalysed reaction is glycerol(in) = glycerol(out). Mediates glycerol diffusion across the cytoplasmic membrane via a pore-type mechanism. This chain is Glycerol uptake facilitator protein (glpF), found in Buchnera aphidicola subsp. Acyrthosiphon pisum (strain APS) (Acyrthosiphon pisum symbiotic bacterium).